Here is a 117-residue protein sequence, read N- to C-terminus: Large ribosomal subunit protein bL20c (117 aa).

This sequence belongs to the bacterial ribosomal protein bL20 family.

The protein resides in the plastid. The protein localises to the chloroplast. In terms of biological role, binds directly to 23S ribosomal RNA and is necessary for the in vitro assembly process of the 50S ribosomal subunit. It is not involved in the protein synthesizing functions of that subunit. This is Large ribosomal subunit protein bL20c from Aethionema grandiflorum (Persian stone-cress).